The sequence spans 83 residues: Normal mucosa of esophagus-specific gene 1 protein (83 aa).

Belongs to the complex I NDUFA4 subunit family. As to expression, strongly expressed in vertebrae, brain, intestine and stomach.

The protein resides in the nucleus. This chain is Normal mucosa of esophagus-specific gene 1 protein (Nmes1), found in Mus musculus (Mouse).